The sequence spans 216 residues: GTP-binding nuclear protein Ran, testis-specific isoform (216 aa).

Ala-2 carries the post-translational modification N-acetylalanine. The region spanning 7 to 171 (PQIQFKLVLV…FWLARKLIGD (165 aa)) is the Small GTPase Ran-type domain. 17–24 (GDGGTGKT) is a binding site for GTP. Thr-24 bears the Phosphothreonine mark. The segment at 37–45 (KEYVATLGV) is switch-I. Position 60 is an N6-acetyllysine (Lys-60). 65–69 (DTAGQ) is a GTP binding site. The interval 68–84 (GQEKFGGLRDGYYIQAQ) is switch-II. Lys-71 bears the N6-acetyllysine; alternate mark. Residue Lys-71 forms a Glycyl lysine isopeptide (Lys-Gly) (interchain with G-Cter in SUMO2); alternate linkage. A Glycyl lysine isopeptide (Lys-Gly) (interchain with G-Cter in ubiquitin); alternate cross-link involves residue Lys-71. The residue at position 99 (Lys-99) is an N6-acetyllysine. 122–125 (NKVD) contacts GTP. Lys-134 is subject to N6-acetyllysine. Lys-152 participates in a covalent cross-link: Glycyl lysine isopeptide (Lys-Gly) (interchain with G-Cter in SUMO2). Position 159 is an N6-acetyllysine; alternate (Lys-159). An N6-succinyllysine; alternate modification is found at Lys-159.

This sequence belongs to the small GTPase superfamily. Ran family. Testis specific.

It is found in the nucleus. The catalysed reaction is GTP + H2O = GDP + phosphate + H(+). In terms of biological role, GTP-binding protein involved in nucleocytoplasmic transport. Required for the import of protein into the nucleus and also for RNA export. Involved in chromatin condensation and control of cell cycle. The protein is GTP-binding nuclear protein Ran, testis-specific isoform (Rasl2-9) of Rattus norvegicus (Rat).